Reading from the N-terminus, the 1464-residue chain is DNA-directed RNA polymerase subunit beta' (1464 aa).

Zn(2+)-binding residues include Cys-66, Cys-68, Cys-96, and Cys-99. Mg(2+) is bound by residues Asp-491, Asp-493, and Asp-495. Residues Cys-838, Cys-912, Cys-919, and Cys-922 each contribute to the Zn(2+) site. Acidic residues predominate over residues 1143-1200; sequence NDDDDDDYYDSDYYDYYDYSDDDDDYDDYDDYYYNYDDDENDNDNDYDYDYDYDYDYD. Positions 1143-1229 are disordered; sequence NDDDDDDYYD…YDYDYDSDSD (87 aa). The segment covering 1204-1219 has biased composition (low complexity); sequence HNSYSHNSYSPSSNDN. Over residues 1220–1229 the composition is skewed to acidic residues; it reads YDYDYDSDSD.

It belongs to the RNA polymerase beta' chain family. The RNAP catalytic core consists of 2 alpha, 1 beta, 1 beta' and 1 omega subunit. When a sigma factor is associated with the core the holoenzyme is formed, which can initiate transcription. The cofactor is Mg(2+). Requires Zn(2+) as cofactor.

It carries out the reaction RNA(n) + a ribonucleoside 5'-triphosphate = RNA(n+1) + diphosphate. Its function is as follows. DNA-dependent RNA polymerase catalyzes the transcription of DNA into RNA using the four ribonucleoside triphosphates as substrates. The sequence is that of DNA-directed RNA polymerase subunit beta' from Karelsulcia muelleri (strain GWSS) (Sulcia muelleri).